The sequence spans 131 residues: Leptin receptor gene-related protein (131 aa).

The next 4 helical transmembrane spans lie at 7-27 (LVGL…GCAL), 32-52 (VYWP…HFIA), 69-89 (LAYF…IILA), and 100-120 (GLVL…FLVF).

This sequence belongs to the OB-RGRP/VPS55 family.

Its subcellular location is the golgi apparatus membrane. It localises to the endosome membrane. Functionally, involved in protein trafficking. May be involved in the down-regulation of membrane protein levels. The chain is Leptin receptor gene-related protein (LEPROT) from Gallus gallus (Chicken).